The following is a 537-amino-acid chain: MGCVQCKDKEATKLTDDRDASISQGAGYRYGADPTPQHYPSFGVTAIPNYNNFHAPVGQGVTVFGGVNTSSHTGTLRTRGGTGVTLFVALYDYEARTEDDLSFRKGERFQILNSTEGDWWDARSLTTGGSGYIPSNYVAPVDSIQAEDWYFGKLGRKDAERQLLSTGNPRGTYLIRESETTKGAFSLSIRDWDDEKGDHVKHYKIRKLDSGGYYITTRAQFDTLQQLVQHYSDRAAGLCCRLVVPCHKGMPRLADLSVKTKDVWEIPRESLQLIKRLGNGQFGEVWMGTWNGTTKVAVKTLKPGTMSPESFLEEAQIMKKLRHDKLVQLYAVVSEEPIYIVTEYMSKGSLLDFLKDGEGRALKLPNLVDMAAQVAAGMAYIERMNYIHRDLRSANILVGDNLVCKIADFGLARLIEDNEYTARQGAKFPIKWTAPEAALYGRFTIKSDVWSFGILLTELVTKGRVPYPGMNNREVLEQVERGYRMPCPQDCPASLHELMLQCWKKDPEERPTFEYLQAFLEDYFTATEPQYQPGDNL.

A lipid anchor (N-myristoyl glycine) is attached at Gly2. Residues Cys3 and Cys6 are each lipidated (S-palmitoyl cysteine). Position 12 is a phosphothreonine; by PKC (Thr12). An SH3 domain is found at 82 to 143; that stretch reads TGVTLFVALY…PSNYVAPVDS (62 aa). One can recognise an SH2 domain in the interval 149–246; that stretch reads WYFGKLGRKD…GLCCRLVVPC (98 aa). The 254-residue stretch at 271–524 folds into the Protein kinase domain; it reads LQLIKRLGNG…YLQAFLEDYF (254 aa). Residues 277–285 and Lys299 contribute to the ATP site; that span reads LGNGQFGEV. The active-site Proton acceptor is the Asp390. The residue at position 420 (Tyr420) is a Phosphotyrosine; by autocatalysis. Tyr531 bears the Phosphotyrosine mark.

Belongs to the protein kinase superfamily. Tyr protein kinase family. SRC subfamily. In terms of assembly, associates through its SH3 domain, to the p85 subunit of phosphatidylinositol 3-kinase. The cofactor is Mn(2+).

It catalyses the reaction L-tyrosyl-[protein] + ATP = O-phospho-L-tyrosyl-[protein] + ADP + H(+). Its activity is regulated as follows. Inhibited by phosphorylation of Tyr-531 by leukocyte common antigen and activated by dephosphorylation of this site. In terms of biological role, tyrosine-protein kinase implicated in the control of cell growth. Plays a role in the regulation of intracellular calcium levels. Required in brain development and mature brain function with important roles in the regulation of axon growth, axon guidance, and neurite extension. This chain is Tyrosine-protein kinase Fyn (fyn), found in Xiphophorus hellerii (Green swordtail).